The sequence spans 351 residues: Protein RecA (351 aa).

68-75 (GPESSGKT) contributes to the ATP binding site.

It belongs to the RecA family.

Its subcellular location is the cytoplasm. Its function is as follows. Can catalyze the hydrolysis of ATP in the presence of single-stranded DNA, the ATP-dependent uptake of single-stranded DNA by duplex DNA, and the ATP-dependent hybridization of homologous single-stranded DNAs. It interacts with LexA causing its activation and leading to its autocatalytic cleavage. The polypeptide is Protein RecA (Thermotoga neapolitana (strain ATCC 49049 / DSM 4359 / NBRC 107923 / NS-E)).